The primary structure comprises 152 residues: Large ribosomal subunit protein bL9 (152 aa).

It belongs to the bacterial ribosomal protein bL9 family.

Functionally, binds to the 23S rRNA. In Streptococcus thermophilus (strain ATCC BAA-491 / LMD-9), this protein is Large ribosomal subunit protein bL9.